We begin with the raw amino-acid sequence, 217 residues long: Probable transaldolase (217 aa).

The Schiff-base intermediate with substrate role is filled by lysine 83.

It belongs to the transaldolase family. Type 3B subfamily.

The protein resides in the cytoplasm. It catalyses the reaction D-sedoheptulose 7-phosphate + D-glyceraldehyde 3-phosphate = D-erythrose 4-phosphate + beta-D-fructose 6-phosphate. Its pathway is carbohydrate degradation; pentose phosphate pathway; D-glyceraldehyde 3-phosphate and beta-D-fructose 6-phosphate from D-ribose 5-phosphate and D-xylulose 5-phosphate (non-oxidative stage): step 2/3. Its function is as follows. Transaldolase is important for the balance of metabolites in the pentose-phosphate pathway. The polypeptide is Probable transaldolase (Erythrobacter litoralis (strain HTCC2594)).